Here is a 209-residue protein sequence, read N- to C-terminus: Imidazole glycerol phosphate synthase subunit HisH (209 aa).

Residues 3–209 (SVAVIDYGMG…ANFLTWNGVS (207 aa)) enclose the Glutamine amidotransferase type-1 domain. Cys-82 serves as the catalytic Nucleophile. Catalysis depends on residues His-187 and Glu-189.

Heterodimer of HisH and HisF.

It is found in the cytoplasm. The catalysed reaction is 5-[(5-phospho-1-deoxy-D-ribulos-1-ylimino)methylamino]-1-(5-phospho-beta-D-ribosyl)imidazole-4-carboxamide + L-glutamine = D-erythro-1-(imidazol-4-yl)glycerol 3-phosphate + 5-amino-1-(5-phospho-beta-D-ribosyl)imidazole-4-carboxamide + L-glutamate + H(+). It carries out the reaction L-glutamine + H2O = L-glutamate + NH4(+). It functions in the pathway amino-acid biosynthesis; L-histidine biosynthesis; L-histidine from 5-phospho-alpha-D-ribose 1-diphosphate: step 5/9. Its function is as follows. IGPS catalyzes the conversion of PRFAR and glutamine to IGP, AICAR and glutamate. The HisH subunit catalyzes the hydrolysis of glutamine to glutamate and ammonia as part of the synthesis of IGP and AICAR. The resulting ammonia molecule is channeled to the active site of HisF. This Nitrosococcus oceani (strain ATCC 19707 / BCRC 17464 / JCM 30415 / NCIMB 11848 / C-107) protein is Imidazole glycerol phosphate synthase subunit HisH.